The sequence spans 96 residues: Integration host factor subunit beta (96 aa).

It belongs to the bacterial histone-like protein family. In terms of assembly, heterodimer of an alpha and a beta chain.

In terms of biological role, this protein is one of the two subunits of integration host factor, a specific DNA-binding protein that functions in genetic recombination as well as in transcriptional and translational control. The polypeptide is Integration host factor subunit beta (Photobacterium profundum (strain SS9)).